We begin with the raw amino-acid sequence, 340 residues long: Coproporphyrin III ferrochelatase (340 aa).

Residues Ser52 and Tyr116 each contribute to the Fe-coproporphyrin III site. Positions 172 and 255 each coordinate Fe(2+).

This sequence belongs to the ferrochelatase family.

Its subcellular location is the cytoplasm. The catalysed reaction is Fe-coproporphyrin III + 2 H(+) = coproporphyrin III + Fe(2+). The protein operates within porphyrin-containing compound metabolism; protoheme biosynthesis. Involved in coproporphyrin-dependent heme b biosynthesis. Catalyzes the insertion of ferrous iron into coproporphyrin III to form Fe-coproporphyrin III. This Mycobacterium marinum (strain ATCC BAA-535 / M) protein is Coproporphyrin III ferrochelatase.